We begin with the raw amino-acid sequence, 425 residues long: Orexin/Hypocretin receptor type 1 (425 aa).

A disordered region spans residues 1–25; it reads MEPSATPGPQMGVPTEGRERSPEPP. Over 1–46 the chain is Extracellular; that stretch reads MEPSATPGPQMGVPTEGRERSPEPPDYEDEFLRYLWRDYLYPKQYE. Positions 26 to 41 are required for response to orexin-A; sequence DYEDEFLRYLWRDYLY. Residues 47 to 67 form a helical membrane-spanning segment; sequence WVLIAAYVAVFFVALVGNTLV. Topologically, residues 68–82 are cytoplasmic; that stretch reads CLAVWRNHHMRTVTN. A helical membrane pass occupies residues 83 to 105; sequence YFIVNLSLADVLVTAICLPASLL. Over 106 to 119 the chain is Extracellular; sequence VDITESWLFGHALC. Residues Cys119 and Cys202 are joined by a disulfide bond. The helical transmembrane segment at 120–140 threads the bilayer; sequence KVIPYLQAVSVSVAVLTLSFI. Over 141–160 the chain is Cytoplasmic; that stretch reads ALDRWYAICHPLLFKSTARR. The chain crosses the membrane as a helical span at residues 161 to 182; that stretch reads ARGSILGIWAVSLAVMVPQAAV. At 183 to 213 the chain is on the extracellular side; sequence MECSSVLPELANRTRLFSVCDERWADDLYPK. N-linked (GlcNAc...) asparagine glycosylation occurs at Asn194. The helical transmembrane segment at 214-235 threads the bilayer; that stretch reads IYHSCFFIVTYLAPLGLMAMAY. The Cytoplasmic segment spans residues 236–298; it reads FQIFRKLWGR…QMRARRKTAK (63 aa). A helical transmembrane segment spans residues 299 to 321; it reads MLMVVLLVFALCYLPISVLNVLK. The Extracellular segment spans residues 322 to 336; it reads RVFGMFRQASDREAV. A helical membrane pass occupies residues 337-360; the sequence is YACFTFSHWLVYANSAANPIIYNF. The Cytoplasmic portion of the chain corresponds to 361–425; it reads LSGKFREQFK…LLTSVTTVLP (65 aa).

The protein belongs to the G-protein coupled receptor 1 family.

It is found in the cell membrane. Moderately selective excitatory receptor for orexin-A and, with a lower affinity, for orexin-B neuropeptide. Triggers an increase in cytoplasmic Ca(2+) levels in response to orexin-A binding. This Bos taurus (Bovine) protein is Orexin/Hypocretin receptor type 1.